The sequence spans 216 residues: Eukaryotic translation initiation factor 3 subunit K (216 aa).

Residues 40–202 form the PCI domain; that stretch reads YDLDANLAVL…HIKSKNIAEK (163 aa).

Belongs to the eIF-3 subunit K family. In terms of assembly, component of the eukaryotic translation initiation factor 3 (eIF-3) complex.

Its subcellular location is the cytoplasm. Its function is as follows. Component of the eukaryotic translation initiation factor 3 (eIF-3) complex, which is involved in protein synthesis of a specialized repertoire of mRNAs and, together with other initiation factors, stimulates binding of mRNA and methionyl-tRNAi to the 40S ribosome. The eIF-3 complex specifically targets and initiates translation of a subset of mRNAs involved in cell proliferation. The protein is Eukaryotic translation initiation factor 3 subunit K of Nematostella vectensis (Starlet sea anemone).